A 336-amino-acid polypeptide reads, in one-letter code: Isopentenyl-diphosphate delta-isomerase (336 aa).

5-6 (RK) is a binding site for substrate. Residues 60-62 (AMT), Ser90, and Asn117 each bind FMN. Residue Gln147 coordinates substrate. A Mg(2+)-binding site is contributed by Glu148. Residues Lys179, Ser204, Thr209, 253-255 (GVR), and 274-275 (SR) each bind FMN.

The protein belongs to the IPP isomerase type 2 family. In terms of assembly, homooctamer. Dimer of tetramers. Requires FMN as cofactor. NADPH serves as cofactor. The cofactor is Mg(2+).

The protein resides in the cytoplasm. The catalysed reaction is isopentenyl diphosphate = dimethylallyl diphosphate. Functionally, involved in the biosynthesis of isoprenoids. Catalyzes the 1,3-allylic rearrangement of the homoallylic substrate isopentenyl (IPP) to its allylic isomer, dimethylallyl diphosphate (DMAPP). In Streptococcus pneumoniae serotype 4 (strain ATCC BAA-334 / TIGR4), this protein is Isopentenyl-diphosphate delta-isomerase.